The chain runs to 335 residues: Biotin synthase (335 aa).

One can recognise a Radical SAM core domain in the interval 41-269 (KQIQVCKLIS…TSDVRLSAGR (229 aa)). Cys-56, Cys-60, and Cys-63 together coordinate [4Fe-4S] cluster. Residues Cys-100, Cys-132, Cys-192, and Arg-264 each coordinate [2Fe-2S] cluster.

The protein belongs to the radical SAM superfamily. Biotin synthase family. Homodimer. [4Fe-4S] cluster serves as cofactor. The cofactor is [2Fe-2S] cluster.

The catalysed reaction is (4R,5S)-dethiobiotin + (sulfur carrier)-SH + 2 reduced [2Fe-2S]-[ferredoxin] + 2 S-adenosyl-L-methionine = (sulfur carrier)-H + biotin + 2 5'-deoxyadenosine + 2 L-methionine + 2 oxidized [2Fe-2S]-[ferredoxin]. Its pathway is cofactor biosynthesis; biotin biosynthesis; biotin from 7,8-diaminononanoate: step 2/2. Its function is as follows. Catalyzes the conversion of dethiobiotin (DTB) to biotin by the insertion of a sulfur atom into dethiobiotin via a radical-based mechanism. This Nostoc sp. (strain PCC 7120 / SAG 25.82 / UTEX 2576) protein is Biotin synthase.